The primary structure comprises 442 residues: Chaperone protein dnaJ A6, chloroplastic (442 aa).

A chloroplast-targeting transit peptide spans 1–82 (MAIIQLGSTC…PRRGSRFTVR (82 aa)). The 65-residue stretch at 86-150 (DYYSVLGVSK…EKKSLYDRYG (65 aa)) folds into the J domain. The CR-type zinc-finger motif lies at 211 to 292 (GMEKEIEISR…CSGDGRVRKT (82 aa)). Residues Cys224, Cys227, Cys241, Cys244, Cys267, Cys270, Cys280, and Cys283 each coordinate Zn(2+). 4 CXXCXGXG motif repeats span residues 224-231 (CGTCEGSG), 241-248 (CTTCGGQG), 267-274 (CSSCNGTG), and 280-287 (CGTCSGDG).

The protein belongs to the DnaJ family.

It localises to the plastid. Its subcellular location is the chloroplast. Its function is as follows. May function together with HSC70 chaperone to assist protein folding and prevent protein aggregation during heat stress in the chloroplast. This is Chaperone protein dnaJ A6, chloroplastic from Arabidopsis thaliana (Mouse-ear cress).